The following is a 690-amino-acid chain: Glycine--tRNA ligase beta subunit (690 aa).

The protein belongs to the class-II aminoacyl-tRNA synthetase family. In terms of assembly, tetramer of two alpha and two beta subunits.

It is found in the cytoplasm. It carries out the reaction tRNA(Gly) + glycine + ATP = glycyl-tRNA(Gly) + AMP + diphosphate. This chain is Glycine--tRNA ligase beta subunit, found in Desulfitobacterium hafniense (strain DSM 10664 / DCB-2).